The primary structure comprises 303 residues: Ribosomal large subunit pseudouridine synthase C (303 aa).

An S4 RNA-binding domain is found at 11-70; that stretch reads FRLDKYLKRLYPSLTQGVIEKALRQKQVTVNFQKAEANLRVKEGDTIFINDYFNLPVTQH. Asp140 is an active-site residue.

This sequence belongs to the pseudouridine synthase RluA family.

The enzyme catalyses uridine(955/2504/2580) in 23S rRNA = pseudouridine(955/2504/2580) in 23S rRNA. Responsible for synthesis of pseudouridine from uracil at positions 955, 2504 and 2580 in 23S ribosomal RNA. This is Ribosomal large subunit pseudouridine synthase C (rluC) from Rickettsia typhi (strain ATCC VR-144 / Wilmington).